The primary structure comprises 277 residues: Protein CIMAP1D (277 aa).

3 STPGR repeats span residues 122–148 (PGPG…LGSR), 202–227 (PGPG…ILGR), and 238–263 (PGPG…MGIR). The tract at residues 181 to 277 (PSYTVVGRTP…ASTMVGDTKC (97 aa)) is disordered.

It belongs to the CIMAP family.

The polypeptide is Protein CIMAP1D (Cimap1d) (Mus musculus (Mouse)).